The sequence spans 840 residues: V-type proton ATPase 116 kDa subunit a 4 (840 aa).

Topologically, residues Met-1–Glu-390 are cytoplasmic. Residues Ile-391 to Phe-409 traverse the membrane as a helical segment. The Vacuolar segment spans residues Gly-410–Asp-411. A helical membrane pass occupies residues Cys-412 to Asn-428. The Cytoplasmic portion of the chain corresponds to Glu-429–Asn-443. A helical transmembrane segment spans residues Thr-444–Ser-473. At Leu-474–Ser-538 the chain is on the vacuolar side. A helical membrane pass occupies residues Tyr-539 to Leu-558. Topologically, residues Ser-559–Phe-576 are cytoplasmic. A helical transmembrane segment spans residues Ile-577–Lys-597. The Vacuolar segment spans residues Trp-598–Phe-642. Residues Phe-643 to Leu-662 form a helical membrane-spanning segment. Residues Arg-663–Thr-727 lie on the Cytoplasmic side of the membrane. Residues Arg-675–His-704 are disordered. A helical membrane pass occupies residues Ile-728 to Ala-752. Residues Gln-753–Gly-773 are Vacuolar-facing. A helical membrane pass occupies residues Gly-774–Glu-812. Residues Phe-813–Glu-840 lie on the Cytoplasmic side of the membrane.

This sequence belongs to the V-ATPase 116 kDa subunit family. In terms of assembly, V-ATPase is a heteromultimeric enzyme made up of two complexes: the ATP-hydrolytic V1 complex and the proton translocation V0 complex. The V1 complex consists of three catalytic AB heterodimers that form a heterohexamer, three peripheral stalks each consisting of EG heterodimers, one central rotor including subunits D and F, and the regulatory subunits C and H. The proton translocation complex V0 consists of the proton transport subunit a, a ring of proteolipid subunits c9c'', rotary subunit d, subunits e and f, and the accessory subunits ATP6AP1/Ac45 and ATP6AP2/PRR. Interacts with the V1 complex V-ATPase subunit A ATP6V1A. Interacts with the V0 complex V-ATPase subunit c ATP6V0C. Expressed in adult and fetal kidney. Found in the inner ear.

The protein resides in the apical cell membrane. The protein localises to the basolateral cell membrane. In terms of biological role, subunit of the V0 complex of vacuolar(H+)-ATPase (V-ATPase), a multisubunit enzyme composed of a peripheral complex (V1) that hydrolyzes ATP and a membrane integral complex (V0) that translocates protons. V-ATPase is responsible for acidifying and maintaining the pH of intracellular compartments and in some cell types, is targeted to the plasma membrane, where it is responsible for acidifying the extracellular environment. Involved in normal vectorial acid transport into the urine by the kidney. The protein is V-type proton ATPase 116 kDa subunit a 4 (ATP6V0A4) of Homo sapiens (Human).